The chain runs to 40 residues: uncharacterized protein (40 aa).

This is an uncharacterized protein from Sulfolobus acidocaldarius (strain ATCC 33909 / DSM 639 / JCM 8929 / NBRC 15157 / NCIMB 11770).